The following is a 52-amino-acid chain: Conotoxin Cal6.3b (52 aa).

Positions 1 to 4 are excised as a propeptide; sequence KKKR. Cystine bridges form between Cys-12/Cys-23, Cys-15/Cys-27, and Cys-22/Cys-30. A Glutamine amide modification is found at Gln-50.

In terms of tissue distribution, expressed by the venom duct.

The protein localises to the secreted. Its function is as follows. Probable neurotoxin with unknown target. Possibly targets ion channels. This is Conotoxin Cal6.3b from Californiconus californicus (California cone).